A 284-amino-acid chain; its full sequence is D-tagatose-1,6-bisphosphate aldolase subunit GatY (284 aa).

The active-site Proton donor is Asp-82. Zn(2+) is bound by residues His-83 and His-180. Gly-181 is a dihydroxyacetone phosphate binding site. His-208 is a Zn(2+) binding site. Residues 209 to 211 (GAS) and 230 to 233 (NVAT) contribute to the dihydroxyacetone phosphate site.

It belongs to the class II fructose-bisphosphate aldolase family. TagBP aldolase GatY subfamily. Forms a complex with GatZ. The cofactor is Zn(2+).

It carries out the reaction D-tagatofuranose 1,6-bisphosphate = D-glyceraldehyde 3-phosphate + dihydroxyacetone phosphate. It participates in carbohydrate metabolism; D-tagatose 6-phosphate degradation; D-glyceraldehyde 3-phosphate and glycerone phosphate from D-tagatose 6-phosphate: step 2/2. Catalytic subunit of the tagatose-1,6-bisphosphate aldolase GatYZ, which catalyzes the reversible aldol condensation of dihydroxyacetone phosphate (DHAP or glycerone-phosphate) with glyceraldehyde 3-phosphate (G3P) to produce tagatose 1,6-bisphosphate (TBP). Requires GatZ subunit for full activity and stability. Is involved in the catabolism of galactitol. The polypeptide is D-tagatose-1,6-bisphosphate aldolase subunit GatY (Salmonella newport (strain SL254)).